Consider the following 193-residue polypeptide: Putative nitroreductase HBN1 (193 aa).

Ser-2 is subject to N-acetylserine.

Belongs to the nitroreductase family. The cofactor is FMN.

Its subcellular location is the cytoplasm. It localises to the nucleus. This is Putative nitroreductase HBN1 (HBN1) from Saccharomyces cerevisiae (strain ATCC 204508 / S288c) (Baker's yeast).